A 397-amino-acid chain; its full sequence is uncharacterized protein (397 aa).

Residues S115 and S141 each carry the phosphoserine modification. The interval 135 to 156 is disordered; the sequence is NSLNHDSPPHTPARRSDNSTSK. A Glycyl lysine isopeptide (Lys-Gly) (interchain with G-Cter in SUMO2) cross-link involves residue K239. Phosphoserine occurs at positions 269 and 296. Positions 289 to 316 are disordered; it reads GRGPTKASPQPALTVKAKATSSATTLAS. Positions 300–316 are enriched in low complexity; that stretch reads ALTVKAKATSSATTLAS. Position 342 is a phosphoserine (S342). Residues 354-397 are disordered; that stretch reads SEAQDSQVTSTKSPTVRCIVPDPPAPLASQRPPRRRWRRTCKDC. The span at 356–367 shows a compositional bias: polar residues; that stretch reads AQDSQVTSTKSP. Residues 385 to 397 are compositionally biased toward basic residues; sequence PPRRRWRRTCKDC.

This is an uncharacterized protein from Rattus norvegicus (Rat).